A 180-amino-acid chain; its full sequence is Nucleoplasmin-3 (180 aa).

The residue at position 2 (Ala2) is an N-acetylalanine. Ser13 and Ser16 each carry phosphoserine. Residue Arg27 is modified to Omega-N-methylarginine. The tract at residues 141 to 180 (TMSNDVSEEESEEEEEEEDSDEEEAELCPILPAKKQGGRP) is disordered. Residues 146 to 166 (VSEEESEEEEEEEDSDEEEAE) show a composition bias toward acidic residues. Phosphoserine is present on residues Ser147, Ser151, and Ser160.

The protein belongs to the nucleoplasmin family. As to quaternary structure, interacts with NPM (via N-terminus). Forms a pentamer with NPM at a ratio 4:1 (NPM3/NPM). Two pentamers form a decamer. Phosphorylated.

Its subcellular location is the nucleus. It localises to the nucleolus. Functionally, plays a role in the regulation of diverse cellular processes such as ribosome biogenesis, chromatin remodeling or protein chaperoning. Modulates the histone chaperone function and the RNA-binding activity of nucleolar phosphoprotein B23/NPM. Efficiently mediates chromatin remodeling when included in a pentamer containing NPM3 and NPM. This is Nucleoplasmin-3 (NPM3) from Pongo abelii (Sumatran orangutan).